We begin with the raw amino-acid sequence, 518 residues long: DNA nucleotidylexotransferase (518 aa).

The short motif at Phe11–Lys17 is the Nuclear localization signal element. Residues Ile27–Gln124 enclose the BRCT domain. A mediates interaction with DNTTIP2 region spans residues Ser153 to Ala518. Residues Val260–Thr264 are involved in DNA binding. A 2'-deoxyribonucleoside 5'-triphosphate is bound by residues Gly335 to Lys340 and His344 to Asp347. Residues Asp345, Asp347, and Asp442 each coordinate Mg(2+). Gly457–Trp458 contributes to the a 2'-deoxyribonucleoside 5'-triphosphate binding site.

It belongs to the DNA polymerase type-X family. In terms of assembly, interacts with PRP19 and DNTTIP1. Interacts with TRERF1. Forms a ternary complex with DNTTIP2 and core histone. Released from this complex by PCNA. It depends on Mg(2+) as a cofactor.

It localises to the nucleus. The catalysed reaction is DNA(n) + a 2'-deoxyribonucleoside 5'-triphosphate = DNA(n+1) + diphosphate. Its function is as follows. Template-independent DNA polymerase which catalyzes the random addition of deoxynucleoside 5'-triphosphate to the 3'-end of a DNA initiator. One of the in vivo functions of this enzyme is the addition of nucleotides at the junction (N region) of rearranged Ig heavy chain and T-cell receptor gene segments during the maturation of B- and T-cells. This chain is DNA nucleotidylexotransferase (DNTT), found in Monodelphis domestica (Gray short-tailed opossum).